Consider the following 180-residue polypeptide: Fucolectin-2 (180 aa).

The signal sequence occupies residues 1–22 (MKVKMIMLLFQILAILTLKSDS). The interval 31 to 179 (QENVALRGRA…VEVNVLFPAP (149 aa)) is F5/8 type C-like. Residues N58, D61, N63, and S72 each contribute to the Ca(2+) site. Intrachain disulfides connect C73–C168, C104–C105, and C130–C146. Alpha-L-fucose contacts are provided by H75 and R101. The Cell attachment site signature appears at 101–103 (RGD). Position 108 (R108) interacts with alpha-L-fucose. Residues C168 and E169 each contribute to the Ca(2+) site.

It belongs to the fucolectin family. In terms of assembly, homotrimer. As to expression, parenchymal hepatocytes.

The protein localises to the secreted. It localises to the extracellular space. In terms of biological role, acts as a defensive agent. Recognizes blood group fucosylated oligosaccharides including A, B, H and Lewis B-type antigens. Does not recognize Lewis A antigen and has low affinity for monovalent haptens. The polypeptide is Fucolectin-2 (Anguilla japonica (Japanese eel)).